Reading from the N-terminus, the 329-residue chain is DNA-directed RNA polymerase subunit alpha (329 aa).

Positions 1–235 are alpha N-terminal domain (alpha-NTD); sequence MQGSVTEFLK…EQLDAFVDLR (235 aa). The alpha C-terminal domain (alpha-CTD) stretch occupies residues 249-329; it reads FDPILLRPVD…NWPPASIAED (81 aa).

The protein belongs to the RNA polymerase alpha chain family. As to quaternary structure, homodimer. The RNAP catalytic core consists of 2 alpha, 1 beta, 1 beta' and 1 omega subunit. When a sigma factor is associated with the core the holoenzyme is formed, which can initiate transcription.

It catalyses the reaction RNA(n) + a ribonucleoside 5'-triphosphate = RNA(n+1) + diphosphate. In terms of biological role, DNA-dependent RNA polymerase catalyzes the transcription of DNA into RNA using the four ribonucleoside triphosphates as substrates. The protein is DNA-directed RNA polymerase subunit alpha of Actinobacillus succinogenes (strain ATCC 55618 / DSM 22257 / CCUG 43843 / 130Z).